A 667-amino-acid polypeptide reads, in one-letter code: DNA ligase (667 aa).

NAD(+) contacts are provided by residues 34 to 38, 83 to 84, and glutamate 114; these read DQEYD and SL. Residue lysine 116 is the N6-AMP-lysine intermediate of the active site. NAD(+) is bound by residues arginine 137, glutamate 170, lysine 286, and lysine 310. Positions 404, 407, 422, and 427 each coordinate Zn(2+). Residues 588–667 form the BRCT domain; sequence HLAQKFENYR…EFQQLLSKED (80 aa).

This sequence belongs to the NAD-dependent DNA ligase family. LigA subfamily. The cofactor is Mg(2+). Mn(2+) serves as cofactor.

The enzyme catalyses NAD(+) + (deoxyribonucleotide)n-3'-hydroxyl + 5'-phospho-(deoxyribonucleotide)m = (deoxyribonucleotide)n+m + AMP + beta-nicotinamide D-nucleotide.. DNA ligase that catalyzes the formation of phosphodiester linkages between 5'-phosphoryl and 3'-hydroxyl groups in double-stranded DNA using NAD as a coenzyme and as the energy source for the reaction. It is essential for DNA replication and repair of damaged DNA. This Spiroplasma citri protein is DNA ligase.